A 507-amino-acid chain; its full sequence is MVTIQADEISNLIRERIEQYNREVNIVNTGTVLQVGDGIARIYGLDEVMAGELVEFEEGTIGIALNLESKNVGVVLMGDGLMIQEGSSVKATARIAQIPVGEAYLGRVINALANPIDGRGEISASGFRLIESPAPGIISRRSVYEPLQTGLIAIDSMIPIGRGQRELIIGDRQTGKTAVATDTILNQQGQNVICVYVAIGQKASSVAQVVNTLQERGAMEYTIVVAETADSPATLQYLAPYTGAALAEYFMYRERHTLIIYDDLSKQAQAYRQMSLLLRRPPGREAYPGDVFYLHSRLLERAAKSSSKLGEGSMTALPIVETQSGDVSAYIPTNVISITDGQIFLSADLFNAGIRPAINVGISVSRVGSAAQIKAMKQVAGKLKLELAQFAELEAFAQFASDLDKASQNQLARGQRLRELLKQSQSAPLTVAEQIITIFTGINGYLDSLELGQVKKFIVELRTYLKTNKPRFEEIISSTKIFTEEAEALLKEAIRDQMDRFLLQQQV.

170 to 177 (GDRQTGKT) serves as a coordination point for ATP.

This sequence belongs to the ATPase alpha/beta chains family. As to quaternary structure, F-type ATPases have 2 components, CF(1) - the catalytic core - and CF(0) - the membrane proton channel. CF(1) has five subunits: alpha(3), beta(3), gamma(1), delta(1), epsilon(1). CF(0) has four main subunits: a, b, b' and c.

It is found in the plastid. The protein localises to the chloroplast thylakoid membrane. It carries out the reaction ATP + H2O + 4 H(+)(in) = ADP + phosphate + 5 H(+)(out). Produces ATP from ADP in the presence of a proton gradient across the membrane. The alpha chain is a regulatory subunit. This chain is ATP synthase subunit alpha, chloroplastic, found in Ipomoea purpurea (Common morning glory).